A 1470-amino-acid chain; its full sequence is MDEAALEPTLVQTLAVSTAKGGRYLSLSPSFQRCSLASWIKENIKKKECCFYVEDGREGICKCGYPKVQHCDEAIKPEDYMGEQWDKHRHVRETPTDAFGDISFGGLGQKTGKYVRVSSDTSCENLYQLMTEQWKLRSPNLLISVTGGAKNFYIKTHLKDKFRRGLIKVAQTTGAWILTGGTHAGVMKHVGMAVRDYTLSSGSMEGQIVVIGVAPWGVIHNRSTLIHPEGRFPAYYSLDEQGQGRLSCLDINHTHFLLVDDGTQGHYGVEIELRARLEKLISKLSLGNRESGVTIPVVCVVLDGGPGTLNTIYNSMLNHTPCVVLEGSGRLADVIAHVASVPVSKVTMALINRLLKRFFMQEYKNFTELQIIEWTKKIQDILRMPHLLTVFRIDEDKNYDVDVAILQALLKASRSDEHAGRHCWERQLELAVAWNRVDIAESEIFTEESQWTSSDLHPAMFSALVGDKPEFVRLLLENGVCVREFLEREETLCELYSHLPSCFFLRKLAKRVQGGKMRRGQEPLPGSRKVCLSHVSEEVRHLLGSFTQPLYIASRYKPTKDDVRLKVPSKGALDLPCSGEEWSADTVWDPGRDLFLWAVVQNNRELAEIGWEQCRDCIAAALAASKILRKLAQESGEDDSEEATEMLELANHYEKQAIGVFSECHSWDAQRAQKLLIRISPSWGRSTCLWLALEAHDKSFIAHSGVQALLTQIWCGELSVDNPHWKVLLCMIFFPLIYTGFLTFRRDEDIQRQAERTEQQKLAMESVFAGQSDGKIKRHLRGFSQKSELKPLNCSSRLMSFLKSPQVKFYWNIASYFGFLWLFAVVLMIDFQTSPSWRELLLYVWLTSLVCEEIRQLYHDFDGSGFRRKAKMYIKDLWNILDVLSIVLFIAGLICRLQASDTVFYIGKVILCIDFIIFCLRLMAIFSISRTLGPKIIIVRRMMLDLFFFMFLLSIWVVAYGVAKQGILIENEERLNWIIRGAVYEPYITIFGNFPTNIDNTLFDISSCSVNASDPLKPKCPMLNADNTPVFPEWLTIMMLCVYLLFANILLLNLLIAIFNYTFQEVQDNTDTIWKFQRYELIKEYHSRPALPPPFILLSHLILFIRGVFLRDLPQRHKNFRQELEQTEEEELLSWEAYMKDNYLASTRQDESQSVEHRIHDTAEKVGAMSELLEREQEMVSATMAKRLARLEEQVSESAKALRWIIDALKSQGCKSKVQPPLMRSKSSDRDDGDSSGQETDDEEAPHMFARQLQYPDSTVRRFPVPEEKVSWEVNFSPYQPPVYNQQDSSESDTSALDKHRNPGGRTGIRGKGALNTLGPNHILHPIFTRWRDAEHKVLEFLAVWEDAEKRWALLGGPAQPDEPLAQVLERILGKKLNEKTKTLLKAGEEVYKGYVDDSRNTDNAWVETSIITLHCDKNTPLMADLNHMVESSLSSHQPLQWREVSSDACRCSYQREALRQIAHHHNTYF.

The Cytoplasmic segment spans residues 1-725; it reads MDEAALEPTL…GELSVDNPHW (725 aa). ADP-D-ribose is bound by residues Tyr267, Arg274, 305-308, and Arg330; that span reads GPGT. The stretch at 726 to 738 is an intramembrane region; that stretch reads KVLLCMIFFPLIY. Residues 739-808 are Cytoplasmic-facing; it reads TGFLTFRRDE…MSFLKSPQVK (70 aa). Residues 809 to 829 form a helical membrane-spanning segment; sequence FYWNIASYFGFLWLFAVVLMI. At 830-836 the chain is on the extracellular side; sequence DFQTSPS. Residues 837 to 857 traverse the membrane as a helical segment; that stretch reads WRELLLYVWLTSLVCEEIRQL. Residues Glu853 and Gln856 each coordinate Ca(2+). Residues 858–876 are Cytoplasmic-facing; the sequence is YHDFDGSGFRRKAKMYIKD. The helical transmembrane segment at 877–897 threads the bilayer; sequence LWNILDVLSIVLFIAGLICRL. Ca(2+) is bound at residue Asn879. At 898–905 the chain is on the extracellular side; the sequence is QASDTVFY. The chain crosses the membrane as a helical span at residues 906 to 926; the sequence is IGKVILCIDFIIFCLRLMAIF. The Cytoplasmic portion of the chain corresponds to 927–941; sequence SISRTLGPKIIIVRR. A helical transmembrane segment spans residues 942–968; the sequence is MMLDLFFFMFLLSIWVVAYGVAKQGIL. Residues 969–977 lie on the Extracellular side of the membrane; the sequence is IENEERLNW. Residues 978–1002 constitute an intramembrane region (pore-forming); it reads IIRGAVYEPYITIFGNFPTNIDNTL. The Selectivity filter motif lies at 991–993; the sequence is FGN. Topologically, residues 1003–1034 are extracellular; that stretch reads FDISSCSVNASDPLKPKCPMLNADNTPVFPEW. Cys1008 and Cys1020 form a disulfide bridge. Asn1011 carries an N-linked (GlcNAc...) asparagine glycan. A helical transmembrane segment spans residues 1035–1059; the sequence is LTIMMLCVYLLFANILLLNLLIAIF. Residues 1060 to 1087 lie on the Cytoplasmic side of the membrane; it reads NYTFQEVQDNTDTIWKFQRYELIKEYHS. Residue Glu1084 participates in Ca(2+) binding. An intramembrane segment occupies 1088 to 1105; that stretch reads RPALPPPFILLSHLILFI. Residues 1106 to 1470 are Cytoplasmic-facing; it reads RGVFLRDLPQ…QIAHHHNTYF (365 aa). Positions 1157-1470 are divergent Nudix hydrolase-like domain; the sequence is HRIHDTAEKV…QIAHHHNTYF (314 aa). Disordered stretches follow at residues 1215–1256 and 1281–1314; these read KSKV…LQYP and PPVY…GKGA. A compositionally biased stretch (acidic residues) spans 1231–1244; it reads DDGDSSGQETDDEE. Residues 1283-1295 show a composition bias toward polar residues; that stretch reads VYNQQDSSESDTS. 2 residues coordinate ADP-D-ribose: Asp1398 and Arg1400.

The protein belongs to the transient receptor (TC 1.A.4) family. LTrpC subfamily. TRPM2 sub-subfamily. As to quaternary structure, homotetramer.

The protein resides in the cell membrane. It catalyses the reaction Ca(2+)(in) = Ca(2+)(out). The enzyme catalyses Na(+)(in) = Na(+)(out). Activated by intracellular ADP-ribose. Ca(2+) and PI(4,5)P2 are required for channel opening by ADP-ribose. In terms of biological role, nonselective, voltage-independent cation channel that mediates Ca(2+) influx, leading to increased cytoplasmic Ca(2+) levels. Functions as a ligand-gated ion channel, gated by intracellular adenosine diphosphate ribose (ADP-ribose), Ca(2+), warm temperature, and oxidative stress. Binding of ADP-ribose to the cytoplasmic N-terminal region causes a conformation change; the channel is primed but still requires Ca(2+) binding to trigger channel opening. In Danio rerio (Zebrafish), this protein is Transient receptor potential cation channel subfamily M member 2.